The sequence spans 185 residues: Large ribosomal subunit protein uL5 (185 aa).

It belongs to the universal ribosomal protein uL5 family. In terms of assembly, part of the 50S ribosomal subunit; part of the 5S rRNA/L5/L18/L25 subcomplex. Contacts the 5S rRNA and the P site tRNA. Forms a bridge to the 30S subunit in the 70S ribosome.

Functionally, this is one of the proteins that bind and probably mediate the attachment of the 5S RNA into the large ribosomal subunit, where it forms part of the central protuberance. In the 70S ribosome it contacts protein S13 of the 30S subunit (bridge B1b), connecting the 2 subunits; this bridge is implicated in subunit movement. Contacts the P site tRNA; the 5S rRNA and some of its associated proteins might help stabilize positioning of ribosome-bound tRNAs. In Nitrobacter winogradskyi (strain ATCC 25391 / DSM 10237 / CIP 104748 / NCIMB 11846 / Nb-255), this protein is Large ribosomal subunit protein uL5.